Here is a 291-residue protein sequence, read N- to C-terminus: MADFSPHHSLLLKATAAGAAIATTNDPNISSFFLYNHSHGSQAPQPANAAAAAIVEDASLESSVSAVLDTSPSVDRKRKAAEDSAHSKDSCKDGKSRRGKKASKEVEEKSTTEDEPPKGYIHVRARRGQATDSHSLAERVRRERISERMRMLQALVPGCDKVTGKALILDEIINYVQSLQNQVEFLSMRIASMSPVLYGFGMDSDGLHDQKIGGMFQEALAMPNPVLNQSSPAPSQAIMDTTSTTSYSLQSQHGAISFSQDNGSYLMQAVGEPRQQEMLNQLVFNNMCSFQ.

Residues 65–120 (SAVLDTSPSVDRKRKAAEDSAHSKDSCKDGKSRRGKKASKEVEEKSTTEDEPPKGY) are disordered. Positions 80–117 (AAEDSAHSKDSCKDGKSRRGKKASKEVEEKSTTEDEPP) are enriched in basic and acidic residues. The short motif at 125–132 (ARRGQATD) is the Nuclear localization signal element. The interval 129-142 (QATDSHSLAERVRR) is basic motif; degenerate. The region spanning 129-179 (QATDSHSLAERVRRERISERMRMLQALVPGCDKVTGKALILDEIINYVQSL) is the bHLH domain. Residues 143–179 (ERISERMRMLQALVPGCDKVTGKALILDEIINYVQSL) form a helix-loop-helix motif region.

It belongs to the bHLH protein family. In terms of assembly, homodimer. Interacts with IBH1, BC1 and LO9-177.

Its subcellular location is the nucleus. Together with BCL2, positive regulator of cell elongation at least partially through increased gibberellic acid (GA) biosynthesis. The polypeptide is Basic helix-loop-helix protein 80 (Oryza sativa subsp. indica (Rice)).